A 465-amino-acid polypeptide reads, in one-letter code: UDP-N-acetylmuramoylalanine--D-glutamate ligase (465 aa).

127–133 contacts ATP; sequence GSNGKST.

It belongs to the MurCDEF family.

It is found in the cytoplasm. It carries out the reaction UDP-N-acetyl-alpha-D-muramoyl-L-alanine + D-glutamate + ATP = UDP-N-acetyl-alpha-D-muramoyl-L-alanyl-D-glutamate + ADP + phosphate + H(+). It functions in the pathway cell wall biogenesis; peptidoglycan biosynthesis. Functionally, cell wall formation. Catalyzes the addition of glutamate to the nucleotide precursor UDP-N-acetylmuramoyl-L-alanine (UMA). This is UDP-N-acetylmuramoylalanine--D-glutamate ligase from Cereibacter sphaeroides (strain ATCC 17023 / DSM 158 / JCM 6121 / CCUG 31486 / LMG 2827 / NBRC 12203 / NCIMB 8253 / ATH 2.4.1.) (Rhodobacter sphaeroides).